The sequence spans 512 residues: 2-isopropylmalate synthase (512 aa).

Residues 4–266 form the Pyruvate carboxyltransferase domain; that stretch reads IQFFDTTLRD…ETNIVLNQFK (263 aa). Residues aspartate 13, histidine 201, histidine 203, and asparagine 237 each contribute to the Mn(2+) site. A regulatory domain region spans residues 390-512; that stretch reads ELKHLQVQYV…SKQADFEEVK (123 aa).

It belongs to the alpha-IPM synthase/homocitrate synthase family. LeuA type 1 subfamily. Homodimer. The cofactor is Mn(2+).

It is found in the cytoplasm. It catalyses the reaction 3-methyl-2-oxobutanoate + acetyl-CoA + H2O = (2S)-2-isopropylmalate + CoA + H(+). It participates in amino-acid biosynthesis; L-leucine biosynthesis; L-leucine from 3-methyl-2-oxobutanoate: step 1/4. Functionally, catalyzes the condensation of the acetyl group of acetyl-CoA with 3-methyl-2-oxobutanoate (2-ketoisovalerate) to form 3-carboxy-3-hydroxy-4-methylpentanoate (2-isopropylmalate). The polypeptide is 2-isopropylmalate synthase (Listeria monocytogenes serotype 4a (strain HCC23)).